A 241-amino-acid polypeptide reads, in one-letter code: Ribose-5-phosphate isomerase A (241 aa).

Substrate contacts are provided by residues 29–32, 84–87, and 97–100; these read TGTT, DGAD, and KGGG. Catalysis depends on Glu-106, which acts as the Proton acceptor. Lys-124 is a substrate binding site.

Belongs to the ribose 5-phosphate isomerase family. As to quaternary structure, homodimer.

It carries out the reaction aldehydo-D-ribose 5-phosphate = D-ribulose 5-phosphate. It participates in carbohydrate degradation; pentose phosphate pathway; D-ribose 5-phosphate from D-ribulose 5-phosphate (non-oxidative stage): step 1/1. Its function is as follows. Catalyzes the reversible conversion of ribose-5-phosphate to ribulose 5-phosphate. This is Ribose-5-phosphate isomerase A from Thermoplasma volcanium (strain ATCC 51530 / DSM 4299 / JCM 9571 / NBRC 15438 / GSS1).